We begin with the raw amino-acid sequence, 378 residues long: Phosphoglycerate kinase (378 aa).

14 residues coordinate (2R)-3-phosphoglycerate: Val-1, Asp-2, Phe-3, Asn-4, Asn-16, Arg-17, Ser-40, His-41, Gly-43, Arg-44, Leu-99, Arg-100, His-147, and Arg-148. Gly-191 contacts ADP. Gly-191 is a binding site for CDP. AMP is bound by residues Ala-192 and Lys-193. An ATP-binding site is contributed by Ala-192. Residue Ala-192 coordinates Mg(2+). Residue Asp-196 participates in CDP binding. Asp-196 lines the Mg(2+) pocket. Lys-197 provides a ligand contact to AMP. An ATP-binding site is contributed by Lys-197. Gly-215 contributes to the ADP binding site. Gly-215 is a CDP binding site. AMP contacts are provided by Gly-216 and Gly-288. Residues Gly-216 and Gly-288 each contribute to the ATP site. Residues Gly-313 and Phe-318 each coordinate CDP. Phe-318 lines the ADP pocket. An AMP-binding site is contributed by Glu-319. ATP is bound by residues Glu-319, Asp-351, and Thr-352. Residue Asp-351 participates in Mg(2+) binding.

The protein belongs to the phosphoglycerate kinase family. In terms of assembly, monomer. Requires Mg(2+) as cofactor.

It carries out the reaction (2R)-3-phosphoglycerate + ATP = (2R)-3-phospho-glyceroyl phosphate + ADP. The protein operates within carbohydrate degradation; glycolysis; pyruvate from D-glyceraldehyde 3-phosphate: step 2/5. The sequence is that of Phosphoglycerate kinase (PGK) from Condylostoma magnum.